Reading from the N-terminus, the 422-residue chain is UDP-N-acetylglucosamine 1-carboxyvinyltransferase (422 aa).

Residue 22-23 participates in phosphoenolpyruvate binding; the sequence is KN. UDP-N-acetyl-alpha-D-glucosamine is bound at residue R93. Catalysis depends on C117, which acts as the Proton donor. C117 is subject to 2-(S-cysteinyl)pyruvic acid O-phosphothioketal. UDP-N-acetyl-alpha-D-glucosamine-binding positions include 122 to 126, D308, and I330; that span reads RPVDL.

Belongs to the EPSP synthase family. MurA subfamily.

The protein localises to the cytoplasm. The catalysed reaction is phosphoenolpyruvate + UDP-N-acetyl-alpha-D-glucosamine = UDP-N-acetyl-3-O-(1-carboxyvinyl)-alpha-D-glucosamine + phosphate. It functions in the pathway cell wall biogenesis; peptidoglycan biosynthesis. Its function is as follows. Cell wall formation. Adds enolpyruvyl to UDP-N-acetylglucosamine. This chain is UDP-N-acetylglucosamine 1-carboxyvinyltransferase, found in Legionella pneumophila (strain Paris).